Here is a 262-residue protein sequence, read N- to C-terminus: Thiazole synthase (262 aa).

The active-site Schiff-base intermediate with DXP is the Lys-105. Residues Gly-166, 192 to 193, and 214 to 215 contribute to the 1-deoxy-D-xylulose 5-phosphate site; these read AG and NT.

Belongs to the ThiG family. Homotetramer. Forms heterodimers with either ThiH or ThiS.

It is found in the cytoplasm. The enzyme catalyses [ThiS sulfur-carrier protein]-C-terminal-Gly-aminoethanethioate + 2-iminoacetate + 1-deoxy-D-xylulose 5-phosphate = [ThiS sulfur-carrier protein]-C-terminal Gly-Gly + 2-[(2R,5Z)-2-carboxy-4-methylthiazol-5(2H)-ylidene]ethyl phosphate + 2 H2O + H(+). It functions in the pathway cofactor biosynthesis; thiamine diphosphate biosynthesis. Catalyzes the rearrangement of 1-deoxy-D-xylulose 5-phosphate (DXP) to produce the thiazole phosphate moiety of thiamine. Sulfur is provided by the thiocarboxylate moiety of the carrier protein ThiS. In vitro, sulfur can be provided by H(2)S. The sequence is that of Thiazole synthase from Phenylobacterium zucineum (strain HLK1).